The chain runs to 251 residues: Retinoic acid early-inducible protein 1-epsilon (251 aa).

Positions methionine 1–glycine 28 are cleaved as a signal peptide. A disulfide bridge connects residues cysteine 37 and cysteine 56. Residues asparagine 38, asparagine 70, asparagine 83, asparagine 141, and asparagine 154 are each glycosylated (N-linked (GlcNAc...) asparagine). Cysteine 88 and cysteine 188 are oxidised to a cystine. Positions leucine 196–threonine 228 are disordered. Low complexity predominate over residues serine 209–serine 219. Serine 225 is lipidated: GPI-anchor amidated serine. Residues histidine 226–methionine 251 constitute a propeptide, removed in mature form.

This sequence belongs to the NKG2D ligand family. In terms of processing, glycosylated.

It localises to the cell membrane. In terms of biological role, acts as a ligand for KLRK1. The polypeptide is Retinoic acid early-inducible protein 1-epsilon (Raet1e) (Mus musculus (Mouse)).